Consider the following 198-residue polypeptide: MVNYPHKVSSQKRQTSLSQPKNFANRGMSFEKMINATNDYYLSQGLAVIHKKPTPIQIVQVDYPQRSRAKIVEAYFRQASTTDYSGVYNGYYIDFEVKETKQKRAIPMKNFHPHQIQHMEQVLAQQGICFVLLHFSSQQETYLLPAFDLIRFYHQDKGQKSMPLEYIREYGYEIKAGAFPQIPYLNVIKEHLLGGKTR.

Positions 1–22 (MVNYPHKVSSQKRQTSLSQPKN) are disordered. Positions 11–22 (QKRQTSLSQPKN) are enriched in polar residues. Residues Thr81, Asp83, Glu96, and Gln115 each contribute to the Mg(2+) site.

The protein belongs to the RecU family. Requires Mg(2+) as cofactor.

The protein localises to the cytoplasm. The enzyme catalyses Endonucleolytic cleavage at a junction such as a reciprocal single-stranded crossover between two homologous DNA duplexes (Holliday junction).. Its function is as follows. Endonuclease that resolves Holliday junction intermediates in genetic recombination. Cleaves mobile four-strand junctions by introducing symmetrical nicks in paired strands. Promotes annealing of linear ssDNA with homologous dsDNA. Required for DNA repair, homologous recombination and chromosome segregation. The polypeptide is Holliday junction resolvase RecU (Streptococcus pneumoniae serotype 2 (strain D39 / NCTC 7466)).